The following is a 237-amino-acid chain: Ribose-5-phosphate isomerase A (237 aa).

Residues 28–31, 83–86, and 97–100 each bind substrate; these read SGST, DGAD, and KGRG. Glu106 functions as the Proton acceptor in the catalytic mechanism. Lys124 contributes to the substrate binding site.

It belongs to the ribose 5-phosphate isomerase family. As to quaternary structure, homodimer.

It catalyses the reaction aldehydo-D-ribose 5-phosphate = D-ribulose 5-phosphate. Its pathway is carbohydrate degradation; pentose phosphate pathway; D-ribose 5-phosphate from D-ribulose 5-phosphate (non-oxidative stage): step 1/1. Its function is as follows. Catalyzes the reversible conversion of ribose-5-phosphate to ribulose 5-phosphate. This Thermomicrobium roseum (strain ATCC 27502 / DSM 5159 / P-2) protein is Ribose-5-phosphate isomerase A.